Consider the following 317-residue polypeptide: Cell division protein FtsX (317 aa).

The Cytoplasmic segment spans residues 1-39 (MAIVRHKQPPLRRFMMYWVDHARQAFSSLGELWRNPLAS). Residues 40-60 (LMTLAVLGVSLALPSCFHVLL) form a helical membrane-spanning segment. The Periplasmic segment spans residues 61–188 (KNAEVVEGSW…LQGIMNLLRH (128 aa)). Residues 189–209 (TITGIAVLLLSAVLLIVGNTL) traverse the membrane as a helical segment. At 210–241 (RLNILNQRSEIEVLKLVGATDAFIHRPFLYTG) the chain is on the cytoplasmic side. The helical transmembrane segment at 242–262 (IWFGVIGGMLAWWLTEVMVIW) threads the bilayer. Topologically, residues 263–280 (SEGVVNELAGLYNSNFRL) are periplasmic. The chain crosses the membrane as a helical span at residues 281 to 301 (VGMGAVDGINLILLGALLGLI). At 302 to 317 (ASWFSVHRHIRDIEPS) the chain is on the cytoplasmic side.

Belongs to the ABC-4 integral membrane protein family. FtsX subfamily. In terms of assembly, forms a membrane-associated complex with FtsE.

It localises to the cell inner membrane. In terms of biological role, part of the ABC transporter FtsEX involved in cellular division. Encoded in an operon consisting of genes ftsY, ftsE and ftsX. This Aeromonas hydrophila protein is Cell division protein FtsX.